Here is a 382-residue protein sequence, read N- to C-terminus: Dual-specificity RNA methyltransferase RlmN (382 aa).

The active-site Proton acceptor is the glutamate 96. Residues 102 to 342 (QGKRGTLCVS…VRTTRGEDID (241 aa)) enclose the Radical SAM core domain. Residues cysteine 109 and cysteine 345 are joined by a disulfide bond. 3 residues coordinate [4Fe-4S] cluster: cysteine 116, cysteine 120, and cysteine 123. S-adenosyl-L-methionine is bound by residues 170 to 171 (GE), serine 202, 224 to 226 (SLH), and asparagine 302. The active-site S-methylcysteine intermediate is cysteine 345.

It belongs to the radical SAM superfamily. RlmN family. [4Fe-4S] cluster serves as cofactor.

It is found in the cytoplasm. The catalysed reaction is adenosine(2503) in 23S rRNA + 2 reduced [2Fe-2S]-[ferredoxin] + 2 S-adenosyl-L-methionine = 2-methyladenosine(2503) in 23S rRNA + 5'-deoxyadenosine + L-methionine + 2 oxidized [2Fe-2S]-[ferredoxin] + S-adenosyl-L-homocysteine. It carries out the reaction adenosine(37) in tRNA + 2 reduced [2Fe-2S]-[ferredoxin] + 2 S-adenosyl-L-methionine = 2-methyladenosine(37) in tRNA + 5'-deoxyadenosine + L-methionine + 2 oxidized [2Fe-2S]-[ferredoxin] + S-adenosyl-L-homocysteine. Functionally, specifically methylates position 2 of adenine 2503 in 23S rRNA and position 2 of adenine 37 in tRNAs. m2A2503 modification seems to play a crucial role in the proofreading step occurring at the peptidyl transferase center and thus would serve to optimize ribosomal fidelity. The chain is Dual-specificity RNA methyltransferase RlmN from Pseudomonas syringae pv. syringae (strain B728a).